Reading from the N-terminus, the 178-residue chain is Probable chorismate pyruvate-lyase (178 aa).

3 residues coordinate substrate: Arg67, Leu105, and Glu164.

It belongs to the UbiC family.

The protein resides in the cytoplasm. It carries out the reaction chorismate = 4-hydroxybenzoate + pyruvate. It participates in cofactor biosynthesis; ubiquinone biosynthesis. Functionally, removes the pyruvyl group from chorismate, with concomitant aromatization of the ring, to provide 4-hydroxybenzoate (4HB) for the ubiquinone pathway. In Methylobacillus flagellatus (strain ATCC 51484 / DSM 6875 / VKM B-1610 / KT), this protein is Probable chorismate pyruvate-lyase.